The chain runs to 166 residues: MYIDTSELCDIYLDQVDVVEPIFSSFGGVNRFYGKVTTVKCFENNGLITDILEENGEGRVLLIDGGGAVRRALVDAELAQLAVDNGWEGIIVYGAVRQIQQLEEMDIGIHALAPIPVGADKQNIGEIDVPVNFGGVTFFPEDYVYADLTGIILSQEPLELDEFNDA.

It belongs to the RraA family. In terms of assembly, homotrimer. Binds to both RNA-binding sites in the C-terminal region of Rne and to RhlB.

The protein localises to the cytoplasm. Its function is as follows. Globally modulates RNA abundance by binding to RNase E (Rne) and regulating its endonucleolytic activity. Can modulate Rne action in a substrate-dependent manner by altering the composition of the degradosome. Modulates RNA-binding and helicase activities of the degradosome. In Pasteurella multocida (strain Pm70), this protein is Regulator of ribonuclease activity A.